The sequence spans 317 residues: tRNA dimethylallyltransferase (317 aa).

19–26 (GPTASGKS) serves as a coordination point for ATP. Residue 21–26 (TASGKS) coordinates substrate. Residues 44 to 47 (DSMQ) are interaction with substrate tRNA.

Belongs to the IPP transferase family. In terms of assembly, monomer. The cofactor is Mg(2+).

The catalysed reaction is adenosine(37) in tRNA + dimethylallyl diphosphate = N(6)-dimethylallyladenosine(37) in tRNA + diphosphate. Functionally, catalyzes the transfer of a dimethylallyl group onto the adenine at position 37 in tRNAs that read codons beginning with uridine, leading to the formation of N6-(dimethylallyl)adenosine (i(6)A). The polypeptide is tRNA dimethylallyltransferase (Methylorubrum populi (strain ATCC BAA-705 / NCIMB 13946 / BJ001) (Methylobacterium populi)).